The primary structure comprises 239 residues: Fatty acid metabolism regulator protein (239 aa).

The HTH gntR-type domain occupies 6–74 (QSPAGFAEEY…HGKPTQVNNF (69 aa)). Residues 34–53 (ERELSELIGVTRTTLREVLQ) constitute a DNA-binding region (H-T-H motif).

Homodimer.

It localises to the cytoplasm. Its function is as follows. Multifunctional regulator of fatty acid metabolism. The polypeptide is Fatty acid metabolism regulator protein (Edwardsiella ictaluri (strain 93-146)).